Here is a 334-residue protein sequence, read N- to C-terminus: Protein RecA (334 aa).

65 to 72 is a binding site for ATP; the sequence is GNESSGKT.

It belongs to the RecA family.

The protein resides in the cytoplasm. Can catalyze the hydrolysis of ATP in the presence of single-stranded DNA, the ATP-dependent uptake of single-stranded DNA by duplex DNA, and the ATP-dependent hybridization of homologous single-stranded DNAs. It interacts with LexA causing its activation and leading to its autocatalytic cleavage. This is Protein RecA from Ureaplasma parvum serovar 3 (strain ATCC 27815 / 27 / NCTC 11736).